We begin with the raw amino-acid sequence, 76 residues long: cAMP-dependent protein kinase inhibitor alpha (76 aa).

Thr2 carries the post-translational modification N-acetylthreonine. The tract at residues 49–76 (KTEGEEDAQRNSTEQSGEAQGEAAKSES) is disordered.

This sequence belongs to the PKI family.

In terms of biological role, extremely potent competitive inhibitor of cAMP-dependent protein kinase activity, this protein interacts with the catalytic subunit of the enzyme after the cAMP-induced dissociation of its regulatory chains. The chain is cAMP-dependent protein kinase inhibitor alpha (PKIA) from Bos taurus (Bovine).